Here is a 135-residue protein sequence, read N- to C-terminus: Large ribosomal subunit protein eL32 (135 aa).

The disordered stretch occupies residues 51-77; sequence GRDNKFRLKMKGKPRPPEPGYRSPRKV.

This sequence belongs to the eukaryotic ribosomal protein eL32 family.

The protein is Large ribosomal subunit protein eL32 (rpl32e) of Nanoarchaeum equitans (strain Kin4-M).